The following is a 660-amino-acid chain: tRNA 5-methylaminomethyl-2-thiouridine biosynthesis bifunctional protein MnmC (660 aa).

Positions 1–242 (MTDRIVPATL…KRAMLVGEFA (242 aa)) are tRNA (mnm(5)s(2)U34)-methyltransferase. Positions 266–660 (IGAGLAGCAV…VRALRHGRVA (395 aa)) are FAD-dependent cmnm(5)s(2)U34 oxidoreductase.

It in the N-terminal section; belongs to the methyltransferase superfamily. tRNA (mnm(5)s(2)U34)-methyltransferase family. This sequence in the C-terminal section; belongs to the DAO family. FAD is required as a cofactor.

The protein resides in the cytoplasm. The enzyme catalyses 5-aminomethyl-2-thiouridine(34) in tRNA + S-adenosyl-L-methionine = 5-methylaminomethyl-2-thiouridine(34) in tRNA + S-adenosyl-L-homocysteine + H(+). Functionally, catalyzes the last two steps in the biosynthesis of 5-methylaminomethyl-2-thiouridine (mnm(5)s(2)U) at the wobble position (U34) in tRNA. Catalyzes the FAD-dependent demodification of cmnm(5)s(2)U34 to nm(5)s(2)U34, followed by the transfer of a methyl group from S-adenosyl-L-methionine to nm(5)s(2)U34, to form mnm(5)s(2)U34. The protein is tRNA 5-methylaminomethyl-2-thiouridine biosynthesis bifunctional protein MnmC of Burkholderia pseudomallei (strain 1106a).